Reading from the N-terminus, the 425-residue chain is Protein CLP1 homolog (425 aa).

ATP is bound by residues E18, K59, and 121 to 126; that span reads DVGKST.

It belongs to the Clp1 family. Clp1 subfamily.

Its subcellular location is the nucleus. Functionally, required for endonucleolytic cleavage during polyadenylation-dependent pre-mRNA 3'-end formation. The chain is Protein CLP1 homolog (cbc) from Drosophila persimilis (Fruit fly).